The following is a 288-amino-acid chain: ATP synthase gamma chain (288 aa).

It belongs to the ATPase gamma chain family. F-type ATPases have 2 components, CF(1) - the catalytic core - and CF(0) - the membrane proton channel. CF(1) has five subunits: alpha(3), beta(3), gamma(1), delta(1), epsilon(1). CF(0) has three main subunits: a, b and c.

The protein localises to the cell membrane. Its function is as follows. Produces ATP from ADP in the presence of a proton gradient across the membrane. The gamma chain is believed to be important in regulating ATPase activity and the flow of protons through the CF(0) complex. This Staphylococcus aureus (strain bovine RF122 / ET3-1) protein is ATP synthase gamma chain.